Here is a 502-residue protein sequence, read N- to C-terminus: MEKFQGYLEFDGARQQSFLYPLFFRDYIYVLAYDHGLNRLNRNRPIFLENADYDKKYSSLIVKRLILRMYEQNRLIIPTKDLNKNLGHTNNFYYQMISVLFAVIVEIPFSLRLGSSIEGKNVKKSYNLQSLHSIFPFLEDKLSHFNYVLDVLIPYPIHLEILVQTLRYRVKDASSLHFFRFCLYEYCNWKNFDSKKKSILNPRFLLFLYNSHVCEYESIFFFLRKQSSHLRSTSYDVFFERILFYGKIQHFFKVFVNNFSALLGLLKDPFLHYVRYHGKYILATKDTPLLMNKWKYYFVNLWQCYFSVWFQSQKVNINQLSKDNLEFLGYLSSLRLNPLVVRSQLLENSFLIDNVRIKLDSNIPISSIIGSLAKDKFCNVLGHPISKATWTDSSDSDILNRFVRICRNISHYYSGSSNKKNLYRIKYILRLCCVKTLARKHKSTVRAFLKRLGSGLLEEFLTGEDQVLSLIFPRSDYASKRLYRVRVWYLDILYLNDLVNHE.

It belongs to the intron maturase 2 family. MatK subfamily.

Its subcellular location is the plastid. The protein localises to the chloroplast. Functionally, usually encoded in the trnK tRNA gene intron. Probably assists in splicing its own and other chloroplast group II introns. This is Maturase K from Brassica oleracea (Wild cabbage).